The primary structure comprises 92 residues: Small ribosomal subunit protein uS19 (92 aa).

The protein belongs to the universal ribosomal protein uS19 family.

Its function is as follows. Protein S19 forms a complex with S13 that binds strongly to the 16S ribosomal RNA. The protein is Small ribosomal subunit protein uS19 of Aliivibrio salmonicida (strain LFI1238) (Vibrio salmonicida (strain LFI1238)).